A 314-amino-acid polypeptide reads, in one-letter code: Methionyl-tRNA formyltransferase (314 aa).

Residue 112-115 (SLLP) coordinates (6S)-5,6,7,8-tetrahydrofolate.

It belongs to the Fmt family.

It catalyses the reaction L-methionyl-tRNA(fMet) + (6R)-10-formyltetrahydrofolate = N-formyl-L-methionyl-tRNA(fMet) + (6S)-5,6,7,8-tetrahydrofolate + H(+). Attaches a formyl group to the free amino group of methionyl-tRNA(fMet). The formyl group appears to play a dual role in the initiator identity of N-formylmethionyl-tRNA by promoting its recognition by IF2 and preventing the misappropriation of this tRNA by the elongation apparatus. This is Methionyl-tRNA formyltransferase from Legionella pneumophila (strain Corby).